Reading from the N-terminus, the 101-residue chain is Small ribosomal subunit protein bS18c (101 aa).

Basic residues predominate over residues Met-1 to Leu-19. Residues Met-1 to Pro-20 are disordered.

It belongs to the bacterial ribosomal protein bS18 family. Part of the 30S ribosomal subunit.

The protein resides in the plastid. It localises to the chloroplast. In Arabis hirsuta (Hairy rock-cress), this protein is Small ribosomal subunit protein bS18c.